Here is a 41-residue protein sequence, read N- to C-terminus: Antifungal peptide 2 (41 aa).

Residue Gln-1 is modified to Pyrrolidone carboxylic acid. Cystine bridges form between Cys-3–Cys-17, Cys-7–Cys-37, Cys-11–Cys-23, Cys-16–Cys-30, and Cys-35–Cys-39. Positions 4-41 (ASRCPRPCNAGLCCSIYGYCGSGAAYCGAGNCRCQCRG) constitute a Chitin-binding type-1 domain.

In terms of assembly, monomer.

Its function is as follows. Has antifungal activity against P.infestans, A.lycopersici, V.dahliae, G.zeae, A.nicotianae, F.moniliforme, F.oxysporum and C.gossypii. This is Antifungal peptide 2 from Eucommia ulmoides (Hardy rubber tree).